A 394-amino-acid chain; its full sequence is MDSQGRKVVVCDNGTGFVKCGYAGSNFPEHIFPALVGRPIIRSTTKVGNIEIKDLMVGDEASELRSMLEVNYPMENGIVRNWDDMKHLWDYTFGPEKLNIDTRSCKILLTEPPMNPTKNREKIVEVMFETYQFSGVYVAIQAVLTLYAQGLLTGVVVDSGDGVTHICPVYEGFSLPHLTRRLDIAGRDITRYLIKLLLLRGYAFNHSADFETVRMIKEKLCYVGYNIEQEQKLALETTVLVESYTLPDGRIIKVGGERFEAPEALFQPHLINVEGVGVAELLFNTIQAADIDTRSEFYKHIVLSGGSTMYPGLPSRLERELKQLYLERVLKGDVEKLSKFKIRIEDPPRRKHMVFLGGAVLADIMKDKDNFWMTRQEYQEKGVRVLEKLGVTVR.

M1 is subject to N-acetylmethionine. Residues 160–162 (GDG) and 214–218 (RMIKE) each bind ATP. Residue K299 is modified to N6-acetyllysine. 305–310 (GGSTMY) provides a ligand contact to ATP. An N6-acetyllysine modification is found at K322.

Belongs to the actin family. ARP2 subfamily. As to quaternary structure, component of the Arp2/3 complex composed of ACTR2/ARP2, ACTR3/ARP3, ARPC1B/p41-ARC, ARPC2/p34-ARC, ARPC3/p21-ARC, ARPC4/p20-ARC and ARPC5/p16-ARC.

The protein resides in the cytoplasm. Its subcellular location is the cytoskeleton. It is found in the cell projection. It localises to the nucleus. In terms of biological role, ATP-binding component of the Arp2/3 complex, a multiprotein complex that mediates actin polymerization upon stimulation by nucleation-promoting factor (NPF). The Arp2/3 complex mediates the formation of branched actin networks in the cytoplasm, providing the force for cell motility. Seems to contact the pointed end of the daughter actin filament. In addition to its role in the cytoplasmic cytoskeleton, the Arp2/3 complex also promotes actin polymerization in the nucleus, thereby regulating gene transcription and repair of damaged DNA. The Arp2/3 complex promotes homologous recombination (HR) repair in response to DNA damage by promoting nuclear actin polymerization, leading to drive motility of double-strand breaks (DSBs). This chain is Actin-related protein 2 (Actr2), found in Rattus norvegicus (Rat).